A 298-amino-acid polypeptide reads, in one-letter code: Homoserine kinase (298 aa).

ATP is bound at residue 83–93 (PISRGLGSSSS).

This sequence belongs to the GHMP kinase family. Homoserine kinase subfamily.

Its subcellular location is the cytoplasm. The catalysed reaction is L-homoserine + ATP = O-phospho-L-homoserine + ADP + H(+). It functions in the pathway amino-acid biosynthesis; L-threonine biosynthesis; L-threonine from L-aspartate: step 4/5. Its function is as follows. Catalyzes the ATP-dependent phosphorylation of L-homoserine to L-homoserine phosphate. The chain is Homoserine kinase from Clostridium botulinum (strain Alaska E43 / Type E3).